The chain runs to 428 residues: Serine--tRNA ligase (428 aa).

Position 235-237 (235-237) interacts with L-serine; that stretch reads TAE. 266–268 lines the ATP pocket; that stretch reads RSE. L-serine is bound at residue Glu-289. 353 to 356 lines the ATP pocket; sequence EISS. Ser-389 contacts L-serine.

This sequence belongs to the class-II aminoacyl-tRNA synthetase family. Type-1 seryl-tRNA synthetase subfamily. In terms of assembly, homodimer. The tRNA molecule binds across the dimer.

The protein resides in the cytoplasm. It carries out the reaction tRNA(Ser) + L-serine + ATP = L-seryl-tRNA(Ser) + AMP + diphosphate + H(+). The enzyme catalyses tRNA(Sec) + L-serine + ATP = L-seryl-tRNA(Sec) + AMP + diphosphate + H(+). It functions in the pathway aminoacyl-tRNA biosynthesis; selenocysteinyl-tRNA(Sec) biosynthesis; L-seryl-tRNA(Sec) from L-serine and tRNA(Sec): step 1/1. Its function is as follows. Catalyzes the attachment of serine to tRNA(Ser). Is also able to aminoacylate tRNA(Sec) with serine, to form the misacylated tRNA L-seryl-tRNA(Sec), which will be further converted into selenocysteinyl-tRNA(Sec). In Shewanella amazonensis (strain ATCC BAA-1098 / SB2B), this protein is Serine--tRNA ligase.